Here is a 289-residue protein sequence, read N- to C-terminus: 4-hydroxy-tetrahydrodipicolinate synthase (289 aa).

Thr-43 serves as a coordination point for pyruvate. Tyr-131 serves as the catalytic Proton donor/acceptor. The active-site Schiff-base intermediate with substrate is the Lys-160. Residue Val-200 participates in pyruvate binding.

It belongs to the DapA family. As to quaternary structure, homotetramer; dimer of dimers.

It localises to the cytoplasm. The catalysed reaction is L-aspartate 4-semialdehyde + pyruvate = (2S,4S)-4-hydroxy-2,3,4,5-tetrahydrodipicolinate + H2O + H(+). It functions in the pathway amino-acid biosynthesis; L-lysine biosynthesis via DAP pathway; (S)-tetrahydrodipicolinate from L-aspartate: step 3/4. Its function is as follows. Catalyzes the condensation of (S)-aspartate-beta-semialdehyde [(S)-ASA] and pyruvate to 4-hydroxy-tetrahydrodipicolinate (HTPA). This Methanococcus maripaludis (strain C5 / ATCC BAA-1333) protein is 4-hydroxy-tetrahydrodipicolinate synthase.